The following is a 745-amino-acid chain: Putative cryptochrome DASH, mitochondrial (745 aa).

A mitochondrion-targeting transit peptide spans 1-22; the sequence is MAPSKVVIYAMRRELRLSDNPI. The region spanning 23-166 is the Photolyase/cryptochrome alpha/beta domain; that stretch reads FHHLSNPESK…DFKLWDDEKY (144 aa). Disordered stretches follow at residues 563 to 688 and 702 to 745; these read KFNL…GGGG and GGYR…QTDA. Residues 571–584 are compositionally biased toward basic residues; it reads SKVKKRPFFRKRGT. The segment covering 591–603 has biased composition (low complexity); sequence GSAESPGSSDSHS. The segment covering 604–616 has biased composition (gly residues); the sequence is GSGGSPDGSGGGN. A compositionally biased stretch (low complexity) spans 632-648; that stretch reads QQTHQGSGRSQSSSNHG. Composition is skewed to gly residues over residues 672–688 and 702–718; these read RGGG…GGGG and GGYR…GGFR. Positions 735–745 are enriched in polar residues; that stretch reads QQVASQFQTDA.

It belongs to the DNA photolyase class-1 family. FAD is required as a cofactor. The cofactor is (6R)-5,10-methylene-5,6,7,8-tetrahydrofolate.

The protein resides in the mitochondrion. In terms of biological role, may have a photoreceptor function. This is Putative cryptochrome DASH, mitochondrial (cry) from Neurospora crassa (strain ATCC 24698 / 74-OR23-1A / CBS 708.71 / DSM 1257 / FGSC 987).